Consider the following 541-residue polypeptide: Chaperonin GroEL 2 (541 aa).

ATP-binding positions include Thr-29 to Pro-32, Asp-86 to Thr-90, Gly-413, Asn-477 to Ala-479, and Asp-493.

It belongs to the chaperonin (HSP60) family. As to quaternary structure, forms a cylinder of 14 subunits composed of two heptameric rings stacked back-to-back. Interacts with the co-chaperonin GroES.

Its subcellular location is the cytoplasm. The catalysed reaction is ATP + H2O + a folded polypeptide = ADP + phosphate + an unfolded polypeptide.. In terms of biological role, together with its co-chaperonin GroES, plays an essential role in assisting protein folding. The GroEL-GroES system forms a nano-cage that allows encapsulation of the non-native substrate proteins and provides a physical environment optimized to promote and accelerate protein folding. This chain is Chaperonin GroEL 2, found in Nocardioides sp. (strain ATCC BAA-499 / JS614).